The following is a 261-amino-acid chain: Cytochrome c oxidase subunit 3 (261 aa).

At 1-15 the chain is on the mitochondrial matrix side; that stretch reads MTHQTHAYHMVDPSP. Residues 16 to 34 form a helical membrane-spanning segment; the sequence is WPLTGALSALLMTSGLTMW. At 35 to 40 the chain is on the mitochondrial intermembrane side; it reads FHYHSV. Residues 41-66 form a helical membrane-spanning segment; sequence TLLLLGLTTNILTMFQWWRDVVREGT. The Mitochondrial matrix segment spans residues 67 to 72; the sequence is FQGHHT. A helical membrane pass occupies residues 73 to 105; that stretch reads PVVQESLRYGMILFITSEVLFFTGFFWAFYHSS. The Mitochondrial intermembrane segment spans residues 106–128; that stretch reads LAPTPELGSYWPPVGVYPLNPLE. A helical membrane pass occupies residues 129–152; the sequence is VPLLNTSVLLASGVTITWAHHSLM. Residues 153–155 lie on the Mitochondrial matrix side of the membrane; the sequence is EGN. The chain crosses the membrane as a helical span at residues 156–183; sequence RKNMLQALLITILLGVYFTLLQMFEYYE. At 184-190 the chain is on the mitochondrial intermembrane side; the sequence is ASFTISD. A helical membrane pass occupies residues 191–223; it reads GIYGSTFFVTTGFHGLHVIIGSTFLLTCFIRQL. At 224–232 the chain is on the mitochondrial matrix side; that stretch reads KFHFTSNHH. A helical transmembrane segment spans residues 233–256; the sequence is FGFEAAAWYWHFVDVVWLFLYLSI. The Mitochondrial intermembrane portion of the chain corresponds to 257-261; sequence YWWGS.

The protein belongs to the cytochrome c oxidase subunit 3 family. Component of the cytochrome c oxidase (complex IV, CIV), a multisubunit enzyme composed of 14 subunits. The complex is composed of a catalytic core of 3 subunits MT-CO1, MT-CO2 and MT-CO3, encoded in the mitochondrial DNA, and 11 supernumerary subunits COX4I, COX5A, COX5B, COX6A, COX6B, COX6C, COX7A, COX7B, COX7C, COX8 and NDUFA4, which are encoded in the nuclear genome. The complex exists as a monomer or a dimer and forms supercomplexes (SCs) in the inner mitochondrial membrane with NADH-ubiquinone oxidoreductase (complex I, CI) and ubiquinol-cytochrome c oxidoreductase (cytochrome b-c1 complex, complex III, CIII), resulting in different assemblies (supercomplex SCI(1)III(2)IV(1) and megacomplex MCI(2)III(2)IV(2)).

It is found in the mitochondrion inner membrane. The catalysed reaction is 4 Fe(II)-[cytochrome c] + O2 + 8 H(+)(in) = 4 Fe(III)-[cytochrome c] + 2 H2O + 4 H(+)(out). Component of the cytochrome c oxidase, the last enzyme in the mitochondrial electron transport chain which drives oxidative phosphorylation. The respiratory chain contains 3 multisubunit complexes succinate dehydrogenase (complex II, CII), ubiquinol-cytochrome c oxidoreductase (cytochrome b-c1 complex, complex III, CIII) and cytochrome c oxidase (complex IV, CIV), that cooperate to transfer electrons derived from NADH and succinate to molecular oxygen, creating an electrochemical gradient over the inner membrane that drives transmembrane transport and the ATP synthase. Cytochrome c oxidase is the component of the respiratory chain that catalyzes the reduction of oxygen to water. Electrons originating from reduced cytochrome c in the intermembrane space (IMS) are transferred via the dinuclear copper A center (CU(A)) of subunit 2 and heme A of subunit 1 to the active site in subunit 1, a binuclear center (BNC) formed by heme A3 and copper B (CU(B)). The BNC reduces molecular oxygen to 2 water molecules using 4 electrons from cytochrome c in the IMS and 4 protons from the mitochondrial matrix. This Loxodonta africana (African elephant) protein is Cytochrome c oxidase subunit 3 (MT-CO3).